Consider the following 225-residue polypeptide: Ribosomal RNA large subunit methyltransferase E (225 aa).

S-adenosyl-L-methionine contacts are provided by Gly-79, Trp-81, Asp-97, Asp-113, and Asp-137. Lys-177 acts as the Proton acceptor in catalysis.

This sequence belongs to the class I-like SAM-binding methyltransferase superfamily. RNA methyltransferase RlmE family.

It localises to the cytoplasm. The catalysed reaction is uridine(2552) in 23S rRNA + S-adenosyl-L-methionine = 2'-O-methyluridine(2552) in 23S rRNA + S-adenosyl-L-homocysteine + H(+). Functionally, specifically methylates the uridine in position 2552 of 23S rRNA at the 2'-O position of the ribose in the fully assembled 50S ribosomal subunit. The polypeptide is Ribosomal RNA large subunit methyltransferase E (Acidiphilium cryptum (strain JF-5)).